Here is a 583-residue protein sequence, read N- to C-terminus: Probable cysteine--tRNA ligase, mitochondrial (583 aa).

Residue Cys82 coordinates Zn(2+). Gly83 is an L-cysteine binding site. A 'HIGH' region motif is present at residues 84 to 94; sequence PTVYSSSHIGH. Residue Thr123 participates in L-cysteine binding. The short motif at 128–131 is the 'KIIK' region element; it reads KIIN. Residues Cys271, His296, and Glu300 each coordinate Zn(2+). An L-cysteine-binding site is contributed by His296. The 'KMSKS' region signature appears at 337-341; the sequence is KMSKS. Lys340 is an ATP binding site.

It belongs to the class-I aminoacyl-tRNA synthetase family. Zn(2+) serves as cofactor.

The protein localises to the mitochondrion. It carries out the reaction tRNA(Cys) + L-cysteine + ATP = L-cysteinyl-tRNA(Cys) + AMP + diphosphate. Its function is as follows. Mitochondrial cysteine-specific aminoacyl-tRNA synthetase that catalyzes the ATP-dependent ligation of cysteine to tRNA(Cys). In terms of biological role, in addition to its role as an aminoacyl-tRNA synthetase, has also cysteine persulfide synthase activity. Produces reactive persulfide species such as cysteine persulfide (CysSSH) from substrate cysteine and mediate direct incorporation of CysSSH into proteins during translations, resulting in protein persulfides and polysulfides. CysSSHs behave as potent antioxidants and cellular protectants. This is Probable cysteine--tRNA ligase, mitochondrial (mcysS) from Dictyostelium discoideum (Social amoeba).